The sequence spans 132 residues: Intraflagellar transport protein 20 homolog (132 aa).

The IFT57-binding stretch occupies residues 70-132 (MKAIGARNLL…EFIDQFIFQK (63 aa)). Positions 74-114 (GARNLLKSIAKQREAQQQQLQALIAEKKMQLERYRVEYEAL) form a coiled coil.

Component of the IFT complex B, at least composed of IFT20, IFT22, IFT25, IFT27, IFT46, IFT52, TRAF3IP1/IFT54, IFT57, IFT74, IFT80, IFT81, and IFT88. Interacts directly with IFT57 and KIF3B/Kinesin II subunit. Interacts with IFT88. Interacts with CEP83. Interacts with SPEF2 (via C-terminus). Interacts with CBL and CBLB. Interacts with TRIP11. Interacts with TTC21A. Interacts with SPATA1. Interacts with USH1G. Interacts with CCDC146. Interacts with CEP78; regulating IFT20 stability and localization. In terms of tissue distribution, expressed in almost all tissues.

Its subcellular location is the golgi apparatus. It localises to the cis-Golgi network. The protein resides in the cytoplasm. It is found in the cytoskeleton. The protein localises to the microtubule organizing center. Its subcellular location is the centrosome. It localises to the centriole. The protein resides in the cilium basal body. It is found in the cell projection. The protein localises to the cilium. Its subcellular location is the cytoplasmic vesicle. It localises to the secretory vesicle. The protein resides in the acrosome. In terms of biological role, part of intraflagellar transport (IFT) particles involved in ciliary process assembly. May play a role in the trafficking of ciliary membrane proteins from the Golgi complex to the cilium. Regulates the platelet-derived growth factor receptor-alpha (PDGFRA) signaling pathway. Required for protein stability of E3 ubiquitin ligases CBL and CBLB that mediate ubiquitination and internalization of PDGFRA for proper feedback inhibition of PDGFRA signaling. Essential for male fertility. Plays an important role in spermatogenesis, particularly spermiogenesis, when germ cells form flagella. May play a role in the transport of flagellar proteins ODF2 and SPAG16 to build sperm flagella and in the removal of redundant sperm cytoplasm. Also involved in autophagy since it is required for trafficking of ATG16L and the expansion of the autophagic compartment. This chain is Intraflagellar transport protein 20 homolog (IFT20), found in Homo sapiens (Human).